The primary structure comprises 396 residues: Elongation factor Tu (396 aa).

The tr-type G domain occupies 10–206 (KPHVNVGTIG…TMDSYIPEPV (197 aa)). A G1 region spans residues 19–26 (GHVDHGKT). 19-26 (GHVDHGKT) contributes to the GTP binding site. Position 26 (T26) interacts with Mg(2+). Positions 60–64 (GITIS) are G2. The tract at residues 81–84 (DCPG) is G3. Residues 81 to 85 (DCPGH) and 136 to 139 (NKAD) each bind GTP. Residues 136-139 (NKAD) are G4. Residues 174–176 (SAL) are G5.

It belongs to the TRAFAC class translation factor GTPase superfamily. Classic translation factor GTPase family. EF-Tu/EF-1A subfamily. In terms of assembly, monomer.

It is found in the cytoplasm. It catalyses the reaction GTP + H2O = GDP + phosphate + H(+). GTP hydrolase that promotes the GTP-dependent binding of aminoacyl-tRNA to the A-site of ribosomes during protein biosynthesis. This Legionella pneumophila (strain Paris) protein is Elongation factor Tu.